Here is a 340-residue protein sequence, read N- to C-terminus: Adenosine kinase (340 aa).

Residue D292 is part of the active site.

Belongs to the carbohydrate kinase PfkB family. The cofactor is Mg(2+).

The catalysed reaction is adenosine + ATP = AMP + ADP + H(+). Its pathway is purine metabolism; AMP biosynthesis via salvage pathway; AMP from adenosine: step 1/1. In Schizosaccharomyces pombe (strain 972 / ATCC 24843) (Fission yeast), this protein is Adenosine kinase (ado1).